The primary structure comprises 144 residues: Large ribosomal subunit protein uL15 (144 aa).

The disordered stretch occupies residues M1–H58. Residues R21–G31 show a composition bias toward gly residues.

This sequence belongs to the universal ribosomal protein uL15 family. As to quaternary structure, part of the 50S ribosomal subunit.

Functionally, binds to the 23S rRNA. The sequence is that of Large ribosomal subunit protein uL15 from Azotobacter vinelandii (strain DJ / ATCC BAA-1303).